We begin with the raw amino-acid sequence, 283 residues long: Phosphatidylserine decarboxylase proenzyme (283 aa).

Active-site charge relay system; for autoendoproteolytic cleavage activity residues include Asp89, His146, and Ser249. Ser249 acts as the Schiff-base intermediate with substrate; via pyruvic acid; for decarboxylase activity in catalysis. Ser249 carries the post-translational modification Pyruvic acid (Ser); by autocatalysis.

Belongs to the phosphatidylserine decarboxylase family. PSD-B subfamily. Prokaryotic type I sub-subfamily. In terms of assembly, heterodimer of a large membrane-associated beta subunit and a small pyruvoyl-containing alpha subunit. Pyruvate serves as cofactor. Is synthesized initially as an inactive proenzyme. Formation of the active enzyme involves a self-maturation process in which the active site pyruvoyl group is generated from an internal serine residue via an autocatalytic post-translational modification. Two non-identical subunits are generated from the proenzyme in this reaction, and the pyruvate is formed at the N-terminus of the alpha chain, which is derived from the carboxyl end of the proenzyme. The autoendoproteolytic cleavage occurs by a canonical serine protease mechanism, in which the side chain hydroxyl group of the serine supplies its oxygen atom to form the C-terminus of the beta chain, while the remainder of the serine residue undergoes an oxidative deamination to produce ammonia and the pyruvoyl prosthetic group on the alpha chain. During this reaction, the Ser that is part of the protease active site of the proenzyme becomes the pyruvoyl prosthetic group, which constitutes an essential element of the active site of the mature decarboxylase.

The protein localises to the cell membrane. The catalysed reaction is a 1,2-diacyl-sn-glycero-3-phospho-L-serine + H(+) = a 1,2-diacyl-sn-glycero-3-phosphoethanolamine + CO2. The protein operates within phospholipid metabolism; phosphatidylethanolamine biosynthesis; phosphatidylethanolamine from CDP-diacylglycerol: step 2/2. Catalyzes the formation of phosphatidylethanolamine (PtdEtn) from phosphatidylserine (PtdSer). This chain is Phosphatidylserine decarboxylase proenzyme, found in Legionella pneumophila (strain Corby).